Consider the following 411-residue polypeptide: Citrate synthase (411 aa).

Residues His304 and Asp363 contribute to the active site.

The protein belongs to the citrate synthase family.

The catalysed reaction is oxaloacetate + acetyl-CoA + H2O = citrate + CoA + H(+). The protein operates within carbohydrate metabolism; tricarboxylic acid cycle; isocitrate from oxaloacetate: step 1/2. In Rickettsia australis, this protein is Citrate synthase (gltA).